A 781-amino-acid chain; its full sequence is Cation channel sperm-associated auxiliary subunit delta (781 aa).

An N-terminal signal peptide occupies residues 1–20 (MLVLMLVVATTFRLCPLVKA). Residues 21-725 (RPLCRIRTLR…YGAFPLSIFP (705 aa)) are Extracellular-facing. Disulfide bonds link cysteine 24–cysteine 370, cysteine 60–cysteine 146, cysteine 145–cysteine 153, cysteine 388–cysteine 497, cysteine 511–cysteine 705, cysteine 526–cysteine 573, and cysteine 625–cysteine 655. Asparagine 231, asparagine 294, asparagine 458, asparagine 473, asparagine 539, and asparagine 631 each carry an N-linked (GlcNAc...) asparagine glycan. A helical transmembrane segment spans residues 726–749 (PEITIVLLTAATLLSIWLAYMIPQ). At 750–781 (LLHTEQGLEGNGFWVRLYQRCRKSCACLWGRC) the chain is on the cytoplasmic side.

This sequence belongs to the CATSPERD family. In terms of assembly, component of the CatSper complex or CatSpermasome composed of the core pore-forming members CATSPER1, CATSPER2, CATSPER3 and CATSPER4 as well as auxiliary members CATSPERB, CATSPERG, CATSPERD, CATSPERE, CATSPERZ, C2CD6/CATSPERT, TMEM249, TMEM262 and EFCAB9. HSPA1 may be an additional auxiliary complex member. The core complex members CATSPER1, CATSPER2, CATSPER3 and CATSPER4 form a heterotetrameric channel. The auxiliary CATSPERB, CATSPERG, CATSPERD and CATSPERE subunits form a pavilion-like structure over the pore which stabilizes the complex through interactions with CATSPER4, CATSPER3, CATSPER1 and CATSPER2 respectively. TMEM262/CATSPERH interacts with CATSPERB, further stabilizing the complex. C2CD6/CATSPERT interacts at least with CATSPERD and is required for targeting the CatSper complex in the flagellar membrane.

The protein localises to the cell projection. It is found in the cilium. The protein resides in the flagellum membrane. In terms of biological role, auxiliary component of the CatSper complex, a complex involved in sperm cell hyperactivation. Sperm cell hyperactivation is needed for sperm motility which is essential late in the preparation of sperm for fertilization. Required for CATSPER1 stability before intraflagellar transport and/or incorporation of the CatSper complex channel into the flagellar membrane. The chain is Cation channel sperm-associated auxiliary subunit delta from Bos taurus (Bovine).